Consider the following 228-residue polypeptide: Protein GlxC (228 aa).

It belongs to the FwdC/FmdC family.

In Rhizobium meliloti (strain 1021) (Ensifer meliloti), this protein is Protein GlxC (glxC).